A 608-amino-acid polypeptide reads, in one-letter code: Auxin response factor 3 (608 aa).

The tract at residues 1-40 (MGGLIDLNVMETEEDETQTQTPSSASGSVSPTSSSSASVS) is disordered. Residues 18-40 (QTQTPSSASGSVSPTSSSSASVS) are compositionally biased toward low complexity. A DNA-binding region (TF-B3) is located at residues 159-261 (FCKTLTASDT…KLRLGVRRAS (103 aa)).

It belongs to the ARF family. As to quaternary structure, homo and heterodimers. In terms of tissue distribution, expressed in the whole plant.

The protein resides in the nucleus. Auxin response factors (ARFs) are transcriptional factors that bind specifically to the DNA sequence 5'-TGTCTC-3' found in the auxin-responsive promoter elements (AuxREs). Could act as transcriptional activator or repressor. Formation of heterodimers with Aux/IAA proteins may alter their ability to modulate early auxin response genes expression. Involved in the establishment or elaboration of tissue patterning during gynoecial development. This chain is Auxin response factor 3 (ARF3), found in Arabidopsis thaliana (Mouse-ear cress).